The primary structure comprises 326 residues: Alkanal monooxygenase beta chain (326 aa).

The protein belongs to the bacterial luciferase oxidoreductase family. In terms of assembly, heterodimer of an alpha and a beta chain.

The catalysed reaction is a long-chain fatty aldehyde + FMNH2 + O2 = a long-chain fatty acid + hnu + FMN + H2O + 2 H(+). Functionally, light-emitting reaction in luminous bacteria. The specific role of the beta subunit is unknown, but it is absolutely required for bioluminescence activity. This chain is Alkanal monooxygenase beta chain (luxB), found in Photobacterium leiognathi.